The following is a 117-amino-acid chain: NADPH-dependent 7-cyano-7-deazaguanine reductase (117 aa).

Residue C31 is the Thioimide intermediate of the active site. D38 acts as the Proton donor in catalysis. Substrate is bound by residues 53 to 55 and 72 to 73; these read IEL and YE.

The protein belongs to the GTP cyclohydrolase I family. QueF type 1 subfamily.

The protein resides in the cytoplasm. The enzyme catalyses 7-aminomethyl-7-carbaguanine + 2 NADP(+) = 7-cyano-7-deazaguanine + 2 NADPH + 3 H(+). Its pathway is tRNA modification; tRNA-queuosine biosynthesis. Catalyzes the NADPH-dependent reduction of 7-cyano-7-deazaguanine (preQ0) to 7-aminomethyl-7-deazaguanine (preQ1). The protein is NADPH-dependent 7-cyano-7-deazaguanine reductase of Chlorobaculum tepidum (strain ATCC 49652 / DSM 12025 / NBRC 103806 / TLS) (Chlorobium tepidum).